We begin with the raw amino-acid sequence, 353 residues long: Purine nucleoside phosphorylase (353 aa).

Over residues 1–16 (MSKFSYLQNGKASTNG) the composition is skewed to polar residues. Residues 1 to 42 (MSKFSYLQNGKASTNGVPHANGHHQQHQNGHSNGVARNGGTA) are disordered. Phosphate-binding positions include Ser98, His129, 149 to 151 (RFH), and Ala181. Residue Glu266 participates in a purine D-ribonucleoside binding. Ser285 serves as a coordination point for phosphate. Residue Asn308 coordinates a purine D-ribonucleoside.

Belongs to the PNP/MTAP phosphorylase family. As to quaternary structure, homotrimer.

It carries out the reaction inosine + phosphate = alpha-D-ribose 1-phosphate + hypoxanthine. The enzyme catalyses guanosine + phosphate = alpha-D-ribose 1-phosphate + guanine. The catalysed reaction is 2'-deoxyguanosine + phosphate = 2-deoxy-alpha-D-ribose 1-phosphate + guanine. It catalyses the reaction 2'-deoxyinosine + phosphate = 2-deoxy-alpha-D-ribose 1-phosphate + hypoxanthine. The protein operates within purine metabolism; purine nucleoside salvage. Its activity is regulated as follows. Inhibited by 5'-deaza-1'-aza-2c-deoxy-1'-(9-methylene) immucillin-H (DADMe-ImmH). Functionally, as part of the purine salvage pathway, catalyzes the phosphorolytic breakdown of the N-glycosidic bond in the beta-(deoxy)ribonucleoside molecules, with the formation of the corresponding free purine bases and pentose-1-phosphate. Preferentially acts on 2'-deoxyinosine and inosine, and to a lesser extent on 2'-deoxyguanosine and guanosine. Has no activity towards adenosine or 2'-deoxyadenosine. The polypeptide is Purine nucleoside phosphorylase (Anopheles gambiae (African malaria mosquito)).